The chain runs to 526 residues: Maturase K (526 aa).

The protein belongs to the intron maturase 2 family. MatK subfamily.

It localises to the plastid. It is found in the chloroplast. Usually encoded in the trnK tRNA gene intron. Probably assists in splicing its own and other chloroplast group II introns. In Iris setosa (Hiougi-ayame), this protein is Maturase K.